The chain runs to 343 residues: Heat-inducible transcription repressor HrcA (343 aa).

This sequence belongs to the HrcA family.

Functionally, negative regulator of class I heat shock genes (grpE-dnaK-dnaJ and groELS operons). Prevents heat-shock induction of these operons. This is Heat-inducible transcription repressor HrcA from Lysinibacillus sphaericus (Bacillus sphaericus).